The sequence spans 180 residues: NADH-quinone oxidoreductase subunit I (180 aa).

4Fe-4S ferredoxin-type domains follow at residues L44 to A74 and R90 to E119. C54, C57, C60, C64, C99, C102, C105, and C109 together coordinate [4Fe-4S] cluster. The tract at residues M145–R180 is disordered.

It belongs to the complex I 23 kDa subunit family. NDH-1 is composed of 14 different subunits. Subunits NuoA, H, J, K, L, M, N constitute the membrane sector of the complex. The cofactor is [4Fe-4S] cluster.

It is found in the cell membrane. The enzyme catalyses a quinone + NADH + 5 H(+)(in) = a quinol + NAD(+) + 4 H(+)(out). In terms of biological role, NDH-1 shuttles electrons from NADH, via FMN and iron-sulfur (Fe-S) centers, to quinones in the respiratory chain. The immediate electron acceptor for the enzyme in this species is believed to be menaquinone. Couples the redox reaction to proton translocation (for every two electrons transferred, four hydrogen ions are translocated across the cytoplasmic membrane), and thus conserves the redox energy in a proton gradient. This Mycolicibacterium smegmatis (strain ATCC 700084 / mc(2)155) (Mycobacterium smegmatis) protein is NADH-quinone oxidoreductase subunit I.